A 714-amino-acid chain; its full sequence is Phosphoribosylformylglycinamidine synthase subunit PurL (714 aa).

His-34 is an active-site residue. Tyr-37 is a binding site for ATP. Glu-78 provides a ligand contact to Mg(2+). Substrate contacts are provided by residues 79–82 and Arg-101; that span reads SHNH. His-80 (proton acceptor) is an active-site residue. Residue Asp-102 participates in Mg(2+) binding. Gln-226 serves as a coordination point for substrate. Asp-254 lines the Mg(2+) pocket. 298-300 is a binding site for substrate; sequence ESQ. The ATP site is built by Asp-474 and Gly-511. Position 512 (Asn-512) interacts with Mg(2+). Ser-514 is a substrate binding site.

It belongs to the FGAMS family. As to quaternary structure, monomer. Part of the FGAM synthase complex composed of 1 PurL, 1 PurQ and 2 PurS subunits.

Its subcellular location is the cytoplasm. The enzyme catalyses N(2)-formyl-N(1)-(5-phospho-beta-D-ribosyl)glycinamide + L-glutamine + ATP + H2O = 2-formamido-N(1)-(5-O-phospho-beta-D-ribosyl)acetamidine + L-glutamate + ADP + phosphate + H(+). It functions in the pathway purine metabolism; IMP biosynthesis via de novo pathway; 5-amino-1-(5-phospho-D-ribosyl)imidazole from N(2)-formyl-N(1)-(5-phospho-D-ribosyl)glycinamide: step 1/2. Its function is as follows. Part of the phosphoribosylformylglycinamidine synthase complex involved in the purines biosynthetic pathway. Catalyzes the ATP-dependent conversion of formylglycinamide ribonucleotide (FGAR) and glutamine to yield formylglycinamidine ribonucleotide (FGAM) and glutamate. The FGAM synthase complex is composed of three subunits. PurQ produces an ammonia molecule by converting glutamine to glutamate. PurL transfers the ammonia molecule to FGAR to form FGAM in an ATP-dependent manner. PurS interacts with PurQ and PurL and is thought to assist in the transfer of the ammonia molecule from PurQ to PurL. This Methanothermobacter marburgensis (strain ATCC BAA-927 / DSM 2133 / JCM 14651 / NBRC 100331 / OCM 82 / Marburg) (Methanobacterium thermoautotrophicum) protein is Phosphoribosylformylglycinamidine synthase subunit PurL.